The sequence spans 250 residues: DNA repair protein RecO (250 aa).

This sequence belongs to the RecO family.

Involved in DNA repair and RecF pathway recombination. The polypeptide is DNA repair protein RecO (Rhodopseudomonas palustris (strain TIE-1)).